Reading from the N-terminus, the 84-residue chain is MSSGGLLLLLGLLTLWAELTPVSGQDRPKFCHLPANPGPCRATITRFYYNSDSKQCEKFTYGGCHGNENNFETKDKCHYTCVGK.

The first 24 residues, 1-24 (MSSGGLLLLLGLLTLWAELTPVSG), serve as a signal peptide directing secretion. Gln25 bears the Pyrrolidone carboxylic acid mark. Residues 31-81 (CHLPANPGPCRATITRFYYNSDSKQCEKFTYGGCHGNENNFETKDKCHYTC) enclose the BPTI/Kunitz inhibitor domain. 3 cysteine pairs are disulfide-bonded: Cys31–Cys81, Cys40–Cys64, and Cys56–Cys77.

It localises to the secreted. Serine protease inhibitor. This is Kunitz/BPTI-like toxin from Austrelaps superbus (Lowland copperhead snake).